Here is a 350-residue protein sequence, read N- to C-terminus: Protein RecA (350 aa).

65–72 (GPESSGKT) is a binding site for ATP.

Belongs to the RecA family.

It is found in the cytoplasm. In terms of biological role, can catalyze the hydrolysis of ATP in the presence of single-stranded DNA, the ATP-dependent uptake of single-stranded DNA by duplex DNA, and the ATP-dependent hybridization of homologous single-stranded DNAs. It interacts with LexA causing its activation and leading to its autocatalytic cleavage. This Clostridium tetani (strain Massachusetts / E88) protein is Protein RecA.